Here is a 350-residue protein sequence, read N- to C-terminus: Zona pellucida-binding protein 1 (350 aa).

The N-terminal stretch at 1-44 (MEALAPGRAPRGRRRAGASGSVLSPLSLAAVLLCALLRAPPAVG) is a signal peptide. 3 N-linked (GlcNAc...) asparagine glycosylation sites follow: Asn113, Asn186, and Asn339.

The protein belongs to the zona pellucida-binding protein Sp38 family. N-glycosylated. As to expression, expressed in testis (at protein level). Expressed in male germ cells.

Its subcellular location is the cytoplasmic vesicle. The protein resides in the secretory vesicle. It is found in the acrosome. The protein localises to the acrosome membrane. It localises to the secreted. Functionally, plays a role in acrosome compaction and sperm morphogenesis. Is implicated in sperm-oocyte interaction during fertilization. This Mus musculus (Mouse) protein is Zona pellucida-binding protein 1 (Zpbp).